The sequence spans 830 residues: Heavy metal tolerance protein (830 aa).

An N-terminal signal peptide occupies residues 1 to 27 (MVLRYNSPRLNILELVLLYVGFFSIGS). A run of 3 helical transmembrane segments spans residues 51–71 (PIGI…VDIS), 88–108 (TTVV…ISCA), and 126–146 (LSVL…IVYS). N-linked (GlcNAc...) asparagine glycosylation is present at Asn150. 3 consecutive transmembrane segments (helical) span residues 156–176 (IVLA…AIYL), 263–283 (FQIF…ILAP), and 304–324 (DVIL…IGSL). An ABC transmembrane type-1 domain is found at 265-550 (IFICIVLLFL…FGTLYRSLQN (286 aa)). Asn350 carries N-linked (GlcNAc...) asparagine glycosylation. 2 helical membrane-spanning segments follow: residues 381–401 (VVFQ…YFFI) and 403–423 (FDIY…YVTV). Residues 429–433 (RTEAR), 492–495 (NIVQ), and Gly542 contribute to the glutathione site. The chain crosses the membrane as a helical span at residues 490–511 (FLNIVQGGIFTFSLAIACLLSA). One can recognise an ABC transporter domain in the interval 584–818 (VIFSHVSFAY…DGGAYKKMWF (235 aa)). ATP-binding positions include Tyr593 and 617-628 (GESGGGKSTIMR).

The protein belongs to the ABC transporter superfamily. ABCB family. Heavy Metal importer (TC 3.A.1.210) subfamily.

The protein localises to the vacuole membrane. Its function is as follows. Involved in metal tolerance. Probably involved in the transport of metal-bound phytochelatins. Compartmentalizes cadmium within vacuoles, thereby protecting cells from cadmium toxicity. This chain is Heavy metal tolerance protein (hmt1), found in Schizosaccharomyces pombe (strain 972 / ATCC 24843) (Fission yeast).